The sequence spans 929 residues: Transcription initiation factor TFIID subunit 3 (929 aa).

Disordered stretches follow at residues 131 to 152 (IVSSQEEEEEEQVPTDGGTSAE) and 176 to 197 (LGKRPLDSPEAEELPAMKRPRL). Phosphoserine occurs at positions 183, 199, 229, and 243. 2 disordered regions span residues 221-358 (TQKI…ETIQ) and 405-578 (DPFE…PWKE). The segment covering 265–288 (TKSFTPKTKTKTSSPGQKTKSPKT) has biased composition (low complexity). N6-acetyllysine is present on Lys266. Phosphoserine occurs at positions 291, 297, and 301. Composition is skewed to polar residues over residues 340-358 (PNRTPSATLSEKISKETIQ) and 434-466 (PKASTSANNFTKSGSTPLPLSGGTSSSDNSWTM). Position 501 is a phosphothreonine (Thr501). A compositionally biased stretch (basic and acidic residues) spans 504–514 (PLHKVYEEKTK). Basic residues predominate over residues 523-537 (KKLKKELKTKMKKKE). Basic and acidic residues predominate over residues 538–578 (KQRDREREKDKNKDKSKEKDKVKEKEKDKETGRETKYPWKE). Lys581 is covalently cross-linked (Glycyl lysine isopeptide (Lys-Gly) (interchain with G-Cter in SUMO2)). Composition is skewed to basic and acidic residues over residues 603–612 (KLKDGLVRKE) and 621–648 (KDREKGKKDKDKREKEKVKDKGREDKMK). Positions 603 to 658 (KLKDGLVRKEKEKHKDKKKDREKGKKDKDKREKEKVKDKGREDKMKAPAPPLVLPP) are disordered. The residue at position 667 (Ser667) is a Phosphoserine. Positions 692 to 701 (EKEKVKEKEK) are enriched in basic and acidic residues. The segment at 692 to 748 (EKEKVKEKEKKKDKKEKKKKKEKEKEKKEKEREKEKREREKREKEKEKHKHEKIKVE) is disordered. Residues 702-713 (KKDKKEKKKKKE) are compositionally biased toward basic residues. Over residues 714–737 (KEKEKKEKEREKEKREREKREKEK) the composition is skewed to basic and acidic residues. A Glycyl lysine isopeptide (Lys-Gly) (interchain with G-Cter in SUMO2) cross-link involves residue Lys746. Residue Ser755 is modified to Phosphoserine. Residue Lys776 is modified to N6-acetyllysine. Residues 778–787 (VPAPEAKPAP) are compositionally biased toward low complexity. The disordered stretch occupies residues 778 to 807 (VPAPEAKPAPSQNRPKTPPPAPAPAPGPML). Over residues 793 to 804 (KTPPPAPAPAPG) the composition is skewed to pro residues. The segment at 865-915 (IWICPGCNKPDDGSPMIGCDDCDDWYHWPCVGIMTAPPEEMQWFCPKCANK) adopts a PHD-type zinc-finger fold. Zn(2+)-binding residues include Cys868, Cys871, Cys883, Cys886, His891, Cys894, Cys909, and Cys912.

The protein belongs to the TAF3 family. In terms of assembly, component of the TFIID basal transcription factor complex, composed of TATA-box-binding protein TBP, and a number of TBP-associated factors (TAFs), including TAF1, TAF2, TAF3, TAF4, TAF5, TAF6, TAF7, TAF8, TAF9, TAF10, TAF11, TAF12 and TAF13. Interacts with TAF10 via the histone fold. Interacts with TAF13, TBP, SAP130 and GCN5L2. Interacts with TBPL2.

It localises to the nucleus. Its function is as follows. The TFIID basal transcription factor complex plays a major role in the initiation of RNA polymerase II (Pol II)-dependent transcription. TFIID recognizes and binds promoters with or without a TATA box via its subunit TBP, a TATA-box-binding protein, and promotes assembly of the pre-initiation complex (PIC). The TFIID complex consists of TBP and TBP-associated factors (TAFs), including TAF1, TAF2, TAF3, TAF4, TAF5, TAF6, TAF7, TAF8, TAF9, TAF10, TAF11, TAF12 and TAF13. The TFIID complex structure can be divided into 3 modules TFIID-A, TFIID-B, and TFIID-C. TAF3 forms the TFIID-A module together with TAF5 and TBP. Required in complex with TBPL2 for the differentiation of myoblasts into myocytes. The TAF3-TBPL2 complex replaces TFIID at specific promoters at an early stage in the differentiation process. In Homo sapiens (Human), this protein is Transcription initiation factor TFIID subunit 3 (TAF3).